The primary structure comprises 211 residues: Shikimate kinase (211 aa).

The tract at residues 1 to 22 (MHFRYNYRMQRSKTPNTKNSDT) is disordered. Over residues 12–22 (SKTPNTKNSDT) the composition is skewed to polar residues. ATP is bound at residue 36-41 (GSGKTT). Thr-40 contacts Mg(2+). Residues Asp-58, Arg-82, and Gly-104 each contribute to the substrate site. Residue Arg-142 participates in ATP binding. Arg-161 contributes to the substrate binding site. ATP is bound at residue Gln-178.

This sequence belongs to the shikimate kinase family. Monomer. Requires Mg(2+) as cofactor.

The protein resides in the cytoplasm. It carries out the reaction shikimate + ATP = 3-phosphoshikimate + ADP + H(+). Its pathway is metabolic intermediate biosynthesis; chorismate biosynthesis; chorismate from D-erythrose 4-phosphate and phosphoenolpyruvate: step 5/7. Catalyzes the specific phosphorylation of the 3-hydroxyl group of shikimic acid using ATP as a cosubstrate. The protein is Shikimate kinase of Nitrosomonas europaea (strain ATCC 19718 / CIP 103999 / KCTC 2705 / NBRC 14298).